The chain runs to 155 residues: 6,7-dimethyl-8-ribityllumazine synthase (155 aa).

Residues phenylalanine 23, 57–59 (AFE), and 81–83 (AVI) each bind 5-amino-6-(D-ribitylamino)uracil. 86 to 87 (ST) serves as a coordination point for (2S)-2-hydroxy-3-oxobutyl phosphate. Histidine 89 (proton donor) is an active-site residue. Phenylalanine 114 serves as a coordination point for 5-amino-6-(D-ribitylamino)uracil. Position 128 (arginine 128) interacts with (2S)-2-hydroxy-3-oxobutyl phosphate.

The protein belongs to the DMRL synthase family.

It catalyses the reaction (2S)-2-hydroxy-3-oxobutyl phosphate + 5-amino-6-(D-ribitylamino)uracil = 6,7-dimethyl-8-(1-D-ribityl)lumazine + phosphate + 2 H2O + H(+). It participates in cofactor biosynthesis; riboflavin biosynthesis; riboflavin from 2-hydroxy-3-oxobutyl phosphate and 5-amino-6-(D-ribitylamino)uracil: step 1/2. Its function is as follows. Catalyzes the formation of 6,7-dimethyl-8-ribityllumazine by condensation of 5-amino-6-(D-ribitylamino)uracil with 3,4-dihydroxy-2-butanone 4-phosphate. This is the penultimate step in the biosynthesis of riboflavin. The protein is 6,7-dimethyl-8-ribityllumazine synthase of Geobacter sulfurreducens (strain ATCC 51573 / DSM 12127 / PCA).